The sequence spans 106 residues: UPF0145 protein VV2_1464 (106 aa).

Belongs to the UPF0145 family.

The chain is UPF0145 protein VV2_1464 from Vibrio vulnificus (strain CMCP6).